The following is a 468-amino-acid chain: Adenosylhomocysteinase (468 aa).

Substrate is bound by residues threonine 57, aspartate 132, and glutamate 194. An NAD(+)-binding site is contributed by 195 to 197; the sequence is TTT. The substrate site is built by lysine 224 and aspartate 228. NAD(+) is bound by residues asparagine 229, 258–263, glutamate 281, asparagine 316, 337–339, and asparagine 382; these read GFGDVG and IGH.

This sequence belongs to the adenosylhomocysteinase family. Requires NAD(+) as cofactor.

The protein localises to the cytoplasm. The enzyme catalyses S-adenosyl-L-homocysteine + H2O = L-homocysteine + adenosine. The protein operates within amino-acid biosynthesis; L-homocysteine biosynthesis; L-homocysteine from S-adenosyl-L-homocysteine: step 1/1. May play a key role in the regulation of the intracellular concentration of adenosylhomocysteine. The protein is Adenosylhomocysteinase of Methylorubrum extorquens (strain CM4 / NCIMB 13688) (Methylobacterium extorquens).